The sequence spans 253 residues: 5-oxoprolinase subunit A (253 aa).

This sequence belongs to the LamB/PxpA family. Forms a complex composed of PxpA, PxpB and PxpC.

It catalyses the reaction 5-oxo-L-proline + ATP + 2 H2O = L-glutamate + ADP + phosphate + H(+). Its function is as follows. Catalyzes the cleavage of 5-oxoproline to form L-glutamate coupled to the hydrolysis of ATP to ADP and inorganic phosphate. The chain is 5-oxoprolinase subunit A from Bacillus cereus (strain ATCC 14579 / DSM 31 / CCUG 7414 / JCM 2152 / NBRC 15305 / NCIMB 9373 / NCTC 2599 / NRRL B-3711).